Here is a 455-residue protein sequence, read N- to C-terminus: Phosphoglucosamine mutase (455 aa).

S108 functions as the Phosphoserine intermediate in the catalytic mechanism. S108, D246, D248, and D250 together coordinate Mg(2+). S108 carries the post-translational modification Phosphoserine.

The protein belongs to the phosphohexose mutase family. It depends on Mg(2+) as a cofactor. In terms of processing, activated by phosphorylation.

The catalysed reaction is alpha-D-glucosamine 1-phosphate = D-glucosamine 6-phosphate. Functionally, catalyzes the conversion of glucosamine-6-phosphate to glucosamine-1-phosphate. This chain is Phosphoglucosamine mutase, found in Frankia casuarinae (strain DSM 45818 / CECT 9043 / HFP020203 / CcI3).